A 275-amino-acid chain; its full sequence is D-apionate oxidoisomerase (275 aa).

NAD(+)-binding positions include 11 to 13 (GKM), E32, and D68. Zn(2+) contacts are provided by H113 and E183.

The protein belongs to the ApnO family. The cofactor is Zn(2+).

It carries out the reaction D-apionate + NAD(+) = 3-oxoisoapionate + NADH + H(+). Its pathway is carbohydrate metabolism. Functionally, involved in catabolism of D-apiose. Catalyzes the conversion of D-apionate to 3-oxo-isoapionate. This chain is D-apionate oxidoisomerase, found in Rhizobium rhizogenes (strain K84 / ATCC BAA-868) (Agrobacterium radiobacter).